The sequence spans 101 residues: MAKTQIKVFGFDHKVVDEAAKKLVSLAVATKNKFVGPIPMPTKREEVTILRSVHVNKKSREQFESRTHQRLVVLENPSSELLDKLKRLELPAGVGLKFKEK.

Belongs to the universal ribosomal protein uS10 family. Part of the 30S ribosomal subunit.

Its function is as follows. Involved in the binding of tRNA to the ribosomes. In Mycoplasmopsis synoviae (strain 53) (Mycoplasma synoviae), this protein is Small ribosomal subunit protein uS10.